A 538-amino-acid polypeptide reads, in one-letter code: Fusion glycoprotein F0 (538 aa).

Positions 1–19 are cleaved as a signal peptide; it reads MKAFSVTCLGFAVFSSSIC. Topologically, residues 20-486 are extracellular; it reads VNINILQQIG…VSVNSKIGAI (467 aa). N-linked (GlcNAc...) asparagine; by host glycosylation is found at N56 and N73. Positions 103–127 are fusion peptide; it reads FAGIAIGIAALGVATAAQVTAAVSL. Residues 128-156 adopt a coiled-coil conformation; that stretch reads VQAQTNARAIAAMKNSIQATNRAIFEVKE. Residue N182 is glycosylated (N-linked (GlcNAc...) asparagine; by host). Intrachain disulfides connect C324/C333, C348/C356, C380/C385, and C387/C410. Residue N352 is glycosylated (N-linked (GlcNAc...) asparagine; by host). N427, N433, and N457 each carry an N-linked (GlcNAc...) asparagine; by host glycan. The stretch at 452–477 forms a coiled coil; sequence ELSKVNASLQNAVKYIKESNHQLQSV. Residues 487–507 traverse the membrane as a helical segment; it reads IVAALVLSILSIIISLLFCCW. Residues 508–538 lie on the Cytoplasmic side of the membrane; that stretch reads AYIATKEIRRINFKTNHINTISSSVDDLIRY.

This sequence belongs to the paramyxoviruses fusion glycoprotein family. In terms of assembly, homotrimer; disulfide-linked F1-F2. Interacts with host LAMP1; LAMP2 and LAMP3; these interactions promote the cleavage of the viral fusion protein F. The inactive precursor F0 is glycosylated and proteolytically cleaved into F1 and F2 to be functionally active. The cleavage is mediated by cellular proteases including host FURIN during the transport and maturation of the polypeptide.

It is found in the virion membrane. It localises to the host cell membrane. Class I viral fusion protein. Under the current model, the protein has at least 3 conformational states: pre-fusion native state, pre-hairpin intermediate state, and post-fusion hairpin state. During viral and plasma cell membrane fusion, the heptad repeat (HR) regions assume a trimer-of-hairpins structure, positioning the fusion peptide in close proximity to the C-terminal region of the ectodomain. The formation of this structure appears to drive apposition and subsequent fusion of viral and plasma cell membranes. Directs fusion of viral and cellular membranes leading to delivery of the nucleocapsid into the cytoplasm. This fusion is pH independent and occurs directly at the outer cell membrane. The trimer of F1-F2 (F protein) probably interacts with HN at the virion surface. Upon HN binding to its cellular receptor, the hydrophobic fusion peptide is unmasked and interacts with the cellular membrane, inducing the fusion between cell and virion membranes. Later in infection, F proteins expressed at the plasma membrane of infected cells could mediate fusion with adjacent cells to form syncytia, a cytopathic effect that could lead to tissue necrosis. In Mumps virus (strain RW) (MuV), this protein is Fusion glycoprotein F0 (F).